A 377-amino-acid polypeptide reads, in one-letter code: MANATVDNKANSEKIKALELAVSTIEKQFGKGSIMRLGANESLVKDVEAISTGALSLDIALGIGGLPKGRICEIYGPESSGKTTLCLSVIAQAQKKGGVVAFVDAEHALDINYARKLGVNTEDLLISQPDTGEQALEITETLVRSGAIDVLVVDSVAALVPRAEIEGDMGDSHVGLQARLMSQALRKLTAAINRSNTLVIFINQIRMKIGVMFGNPETTTGGNALKFYSSVRLDVRRVGAIKNGEDVTGNRTAVKVVKNKMAPPFTKVEFDLMYGEGISEEGDLLDLAVTANMVEKSGAWFSINGERMGQGRDAAKNFLKEHPEYMVELRKKILAANGIGKLLVDTNGNNGEDHEGTEPVEIEAEDAAPKKGKKGKH.

An ATP-binding site is contributed by 76-83 (GPESSGKT). Positions 346 to 377 (TNGNNGEDHEGTEPVEIEAEDAAPKKGKKGKH) are disordered.

This sequence belongs to the RecA family.

Its subcellular location is the cytoplasm. Its function is as follows. Can catalyze the hydrolysis of ATP in the presence of single-stranded DNA, the ATP-dependent uptake of single-stranded DNA by duplex DNA, and the ATP-dependent hybridization of homologous single-stranded DNAs. It interacts with LexA causing its activation and leading to its autocatalytic cleavage. The polypeptide is Protein RecA (Bdellovibrio bacteriovorus (strain ATCC 15356 / DSM 50701 / NCIMB 9529 / HD100)).